Consider the following 76-residue polypeptide: Vasotab (76 aa).

The N-terminal stretch at 1-20 (MKFALFSVLVVLLIATFVAA) is a signal peptide. The region spanning 21-76 (DECPRICTADYRPVCGTPSGGRRSANRTFGNQCSLNAHNCLNKGDTYDKLHDGECK) is the Kazal-like domain. Intrachain disulfides connect cysteine 23-cysteine 60, cysteine 27-cysteine 53, and cysteine 35-cysteine 75.

As to expression, expressed by the salivary gland.

It is found in the secreted. Vasodilator protein that inhibits vasoconstriction of isolated rat femoral artery induced by phenylephrine. Since platelet aggregation and vasoconstriction are key hemostatic responses, particularly in small wounds, this protein likely participates in the antihemostatic responses during blood feeding. Blocks L-type calcium channels (Cav1/CACNA1) in left ventricular myocytes isolated from rat hearts. The sequence is that of Vasotab from Hybomitra bimaculata (Horse fly).